Consider the following 412-residue polypeptide: uncharacterized protein (412 aa).

7 tandem repeats follow at residues 112-116 (GSIRS), 117-121 (GSIRS), 122-126 (GSIRD), 127-131 (GSIRD), 132-136 (GSIRS), 137-141 (GNIRD), and 142-146 (GSVRS). The segment at 112-146 (GSIRSGSIRSGSIRDGSIRDGSIRSGNIRDGSVRS) is 7 X 5 AA tandem repeats of G-[NS]-[IV]-R-[DNS]. The span at 116–126 (SGSIRSGSIRD) shows a compositional bias: low complexity. The segment at 116–208 (SGSIRSGSIR…YSEKSIKPST (93 aa)) is disordered. Residues 192–208 (NHYAESEYSEKSIKPST) are compositionally biased toward basic and acidic residues.

This sequence belongs to the asfivirus B407L family.

This is an uncharacterized protein from Ornithodoros (relapsing fever ticks).